The sequence spans 147 residues: Large ribosomal subunit protein uL13 (147 aa).

The protein belongs to the universal ribosomal protein uL13 family. As to quaternary structure, part of the 50S ribosomal subunit.

This protein is one of the early assembly proteins of the 50S ribosomal subunit, although it is not seen to bind rRNA by itself. It is important during the early stages of 50S assembly. This Mycobacterium leprae (strain Br4923) protein is Large ribosomal subunit protein uL13.